We begin with the raw amino-acid sequence, 63 residues long: Large ribosomal subunit protein uL29 (63 aa).

It belongs to the universal ribosomal protein uL29 family.

The polypeptide is Large ribosomal subunit protein uL29 (Psychromonas ingrahamii (strain DSM 17664 / CCUG 51855 / 37)).